An 85-amino-acid polypeptide reads, in one-letter code: Alpha-toxin Ac2 (85 aa).

The N-terminal stretch at Met1–Ser19 is a signal peptide. In terms of domain architecture, LCN-type CS-alpha/beta spans Lys21 to Lys83. 4 cysteine pairs are disulfide-bonded: Cys31-Cys82, Cys35-Cys55, Cys41-Cys65, and Cys45-Cys67. Lys83 bears the Lysine amide mark.

This sequence belongs to the long (4 C-C) scorpion toxin superfamily. Sodium channel inhibitor family. Alpha subfamily. In terms of tissue distribution, expressed by the venom gland.

Its subcellular location is the secreted. Functionally, alpha toxins bind voltage-independently at site-3 of sodium channels (Nav) and inhibit the inactivation of the activated channels, thereby blocking neuronal transmission. This chain is Alpha-toxin Ac2, found in Androctonus crassicauda (Arabian fat-tailed scorpion).